Here is a 181-residue protein sequence, read N- to C-terminus: Adenylyl-sulfate kinase (181 aa).

Residue 12–19 (GLSGAGKS) coordinates ATP. Serine 86 (phosphoserine intermediate) is an active-site residue.

It belongs to the APS kinase family.

The enzyme catalyses adenosine 5'-phosphosulfate + ATP = 3'-phosphoadenylyl sulfate + ADP + H(+). Its pathway is sulfur metabolism; hydrogen sulfide biosynthesis; sulfite from sulfate: step 2/3. In terms of biological role, catalyzes the synthesis of activated sulfate. The polypeptide is Adenylyl-sulfate kinase (Microcystis aeruginosa (strain NIES-843 / IAM M-2473)).